The chain runs to 33 residues: Pardaxin P-5 (33 aa).

It belongs to the pardaxin family. As to quaternary structure, monomer. In aqueous solution exists as a tetramer.

Its subcellular location is the secreted. The protein localises to the target cell membrane. Functionally, exhibits unusual shark repellent and surfactant properties. Forms voltage-dependent, ion-permeable channels in membranes. At high concentration causes cell membrane lysis. The protein is Pardaxin P-5 of Pardachirus marmoratus (Finless sole).